Here is a 236-residue protein sequence, read N- to C-terminus: Small ribosomal subunit protein uS3 (236 aa).

Positions Leu38–Lys106 constitute a KH type-2 domain. The disordered stretch occupies residues Asp211 to Gly236.

This sequence belongs to the universal ribosomal protein uS3 family. Part of the 30S ribosomal subunit. Forms a tight complex with proteins S10 and S14.

Its function is as follows. Binds the lower part of the 30S subunit head. Binds mRNA in the 70S ribosome, positioning it for translation. This chain is Small ribosomal subunit protein uS3, found in Salinibacter ruber (strain DSM 13855 / M31).